The primary structure comprises 340 residues: N-acetyl-gamma-glutamyl-phosphate reductase (340 aa).

C146 is a catalytic residue.

Belongs to the NAGSA dehydrogenase family. Type 1 subfamily.

It localises to the cytoplasm. The enzyme catalyses N-acetyl-L-glutamate 5-semialdehyde + phosphate + NADP(+) = N-acetyl-L-glutamyl 5-phosphate + NADPH + H(+). The protein operates within amino-acid biosynthesis; L-arginine biosynthesis; N(2)-acetyl-L-ornithine from L-glutamate: step 3/4. In terms of biological role, catalyzes the NADPH-dependent reduction of N-acetyl-5-glutamyl phosphate to yield N-acetyl-L-glutamate 5-semialdehyde. The sequence is that of N-acetyl-gamma-glutamyl-phosphate reductase from Streptococcus gordonii (strain Challis / ATCC 35105 / BCRC 15272 / CH1 / DL1 / V288).